A 275-amino-acid polypeptide reads, in one-letter code: Formamidopyrimidine-DNA glycosylase (275 aa).

Residue Pro-2 is the Schiff-base intermediate with DNA of the active site. Glu-3 functions as the Proton donor in the catalytic mechanism. Lys-58 (proton donor; for beta-elimination activity) is an active-site residue. Residues His-91 and Arg-110 each coordinate DNA. Residues 238 to 272 form an FPG-type zinc finger; the sequence is QVYGQTGKPCPRCGQAIVKLKVGGRGTHICPKCQK. Arg-262 serves as the catalytic Proton donor; for delta-elimination activity.

Belongs to the FPG family. In terms of assembly, monomer. Requires Zn(2+) as cofactor.

It carries out the reaction Hydrolysis of DNA containing ring-opened 7-methylguanine residues, releasing 2,6-diamino-4-hydroxy-5-(N-methyl)formamidopyrimidine.. The enzyme catalyses 2'-deoxyribonucleotide-(2'-deoxyribose 5'-phosphate)-2'-deoxyribonucleotide-DNA = a 3'-end 2'-deoxyribonucleotide-(2,3-dehydro-2,3-deoxyribose 5'-phosphate)-DNA + a 5'-end 5'-phospho-2'-deoxyribonucleoside-DNA + H(+). Involved in base excision repair of DNA damaged by oxidation or by mutagenic agents. Acts as a DNA glycosylase that recognizes and removes damaged bases. Has a preference for oxidized purines, such as 7,8-dihydro-8-oxoguanine (8-oxoG). Has AP (apurinic/apyrimidinic) lyase activity and introduces nicks in the DNA strand. Cleaves the DNA backbone by beta-delta elimination to generate a single-strand break at the site of the removed base with both 3'- and 5'-phosphates. The protein is Formamidopyrimidine-DNA glycosylase of Streptococcus pyogenes serotype M6 (strain ATCC BAA-946 / MGAS10394).